We begin with the raw amino-acid sequence, 85 residues long: Small ribosomal subunit protein uS17 (85 aa).

It belongs to the universal ribosomal protein uS17 family. As to quaternary structure, part of the 30S ribosomal subunit.

Its function is as follows. One of the primary rRNA binding proteins, it binds specifically to the 5'-end of 16S ribosomal RNA. This is Small ribosomal subunit protein uS17 from Mycoplasma genitalium (strain ATCC 33530 / DSM 19775 / NCTC 10195 / G37) (Mycoplasmoides genitalium).